A 492-amino-acid polypeptide reads, in one-letter code: Octanoyltransferase (492 aa).

Residues 1-255 (MRCILLGSGT…GYDGLEAIID (255 aa)) are unknown. The segment at 256 to 492 (EKGIRIKDFE…AVFRRNFGAL (237 aa)) is lipB domain. One can recognise a BPL/LPL catalytic domain in the interval 305-492 (RKPQNTLLFC…AVFRRNFGAL (188 aa)). Substrate contacts are provided by residues 350-357 (RGGDITYH), 423-425 (AIG), and 436-438 (GFA). Cys454 serves as the catalytic Acyl-thioester intermediate.

The protein in the C-terminal section; belongs to the LipB family.

The protein localises to the cytoplasm. The catalysed reaction is octanoyl-[ACP] + L-lysyl-[protein] = N(6)-octanoyl-L-lysyl-[protein] + holo-[ACP] + H(+). It functions in the pathway protein modification; protein lipoylation via endogenous pathway; protein N(6)-(lipoyl)lysine from octanoyl-[acyl-carrier-protein]: step 1/2. Functionally, catalyzes the transfer of endogenously produced octanoic acid from octanoyl-acyl-carrier-protein onto the lipoyl domains of lipoate-dependent enzymes. Lipoyl-ACP can also act as a substrate although octanoyl-ACP is likely to be the physiological substrate. The polypeptide is Octanoyltransferase (Porphyromonas gingivalis (strain ATCC BAA-308 / W83)).